Reading from the N-terminus, the 834-residue chain is Protein SEY1 (834 aa).

The segment at 1 to 26 (MSNVPSPTVTLEGDSPDAAHEAVSSS) is disordered. Residues 1–733 (MSNVPSPTVT…KRSIMQHVTQ (733 aa)) lie on the Cytoplasmic side of the membrane. Residues 63 to 296 (PGDYRIISVF…SESFLFKPNY (234 aa)) enclose the GB1/RHD3-type G domain. Position 73 to 80 (73 to 80 (GSQSTGKS)) interacts with GTP. Positions 659 to 688 (VRDKKLKRQYETVREEKEAEEEDEDEWDSE) form a coiled coil. The interval 670–689 (TVREEKEAEEEDEDEWDSED) is disordered. Residues 676–689 (EAEEEDEDEWDSED) are compositionally biased toward acidic residues. Residues 734-754 (IPYYIYIVILVLGWNEFMAIL) traverse the membrane as a helical segment. Residues 755-757 (RNP) are Lumenal-facing. Residues 758–778 (FFFTLLIMLAGATYVMYSMNL) traverse the membrane as a helical segment. Over 779-834 (LGPASIVVQRMANEALGLAKEKLREFVVDDHMQHGHNMKKMTTNDIELDDLSEEST) the chain is Cytoplasmic.

Belongs to the TRAFAC class dynamin-like GTPase superfamily. GB1/RHD3 GTPase family. RHD3 subfamily.

It localises to the endoplasmic reticulum membrane. Its function is as follows. Cooperates with the reticulon proteins and tubule-shaping DP1 family proteins to generate and maintain the structure of the tubular endoplasmic reticulum network. Has GTPase activity, which is required for its function in ER organization. The sequence is that of Protein SEY1 from Clavispora lusitaniae (strain ATCC 42720) (Yeast).